Reading from the N-terminus, the 117-residue chain is Large ribosomal subunit protein uL18 (117 aa).

This sequence belongs to the universal ribosomal protein uL18 family. As to quaternary structure, part of the 50S ribosomal subunit; part of the 5S rRNA/L5/L18/L25 subcomplex. Contacts the 5S and 23S rRNAs.

In terms of biological role, this is one of the proteins that bind and probably mediate the attachment of the 5S RNA into the large ribosomal subunit, where it forms part of the central protuberance. The sequence is that of Large ribosomal subunit protein uL18 from Edwardsiella ictaluri (strain 93-146).